A 119-amino-acid polypeptide reads, in one-letter code: Large ribosomal subunit protein uL14m (119 aa).

This sequence belongs to the universal ribosomal protein uL14 family.

It is found in the mitochondrion. In Tetrahymena pyriformis, this protein is Large ribosomal subunit protein uL14m.